The sequence spans 252 residues: Probable transcriptional regulatory protein TW504 (252 aa).

The protein belongs to the TACO1 family.

Its subcellular location is the cytoplasm. The chain is Probable transcriptional regulatory protein TW504 from Tropheryma whipplei (strain TW08/27) (Whipple's bacillus).